Here is a 350-residue protein sequence, read N- to C-terminus: MNALDIINLSKSFGAQTALDSINLSVPTGSRTVIVGPSGSGKTTLLRMIAGFEFPDAGSLMLNGQTLVDRTHAVPAYQRQIGYVPQDGALFPHMTVADNIGFGLAETGSARAERIQALMDNVALNADMATRWPHELSGGQQQRVSLARALAQRPRLMLLDEPFSALDTGLRGAMRKMVARLLEEAGVTTILVTHDQGEALSFADQLAVMRDGRLVQSGHPMDLYRYPNDEQTAHFLGDAVVMPARIEAGWAHCDLGRVMVNSNGFAGAAQIMLRPEQLQLSDIPADPDGCHAVVTDRDFGGNVCTLTVELRTQASPGRSLLVRSSGMHAPPAGSAVQLSILGAAHVFATP.

The 233-residue stretch at 4 to 236 folds into the ABC transporter domain; that stretch reads LDIINLSKSF…PNDEQTAHFL (233 aa). Position 36 to 43 (36 to 43) interacts with ATP; the sequence is GPSGSGKT.

The protein belongs to the ABC transporter superfamily. Fe(3+) ion importer (TC 3.A.1.10) family. The complex is composed of two ATP-binding proteins (FbpC), two transmembrane proteins (FbpB) and a solute-binding protein (FbpA).

The protein localises to the cell inner membrane. It catalyses the reaction Fe(3+)(out) + ATP + H2O = Fe(3+)(in) + ADP + phosphate + H(+). Part of the ABC transporter complex FbpABC involved in Fe(3+) ions import. Responsible for energy coupling to the transport system. This is Fe(3+) ions import ATP-binding protein FbpC from Pseudomonas fluorescens (strain Pf0-1).